The following is an 82-amino-acid chain: RNA-binding protein GWCH70_0105 (82 aa).

This sequence belongs to the eukaryotic ribosomal protein eL8 family.

The polypeptide is RNA-binding protein GWCH70_0105 (Geobacillus sp. (strain WCH70)).